The primary structure comprises 974 residues: GATOR2 complex protein WDR59 (974 aa).

7 WD repeats span residues 57–98 (QSKW…GEVG), 103–143 (GHTR…KPTV), 146–185 (SAVAGASQVKWNKKNANCLATSHDGDVRIWDKRKPSTAVE), 189–229 (AHLS…KYLN), 232–276 (PCQV…TPVH), 278–318 (FVGH…RVDS), and 319–362 (QMQR…TASH). The tract at residues 350 to 374 (HTEDTDHQHTASHGEEEALKEDPPR) is disordered. The region spanning 393–494 (QEFSLINVQI…RQLVSCLESF (102 aa)) is the RWD domain. S564 is modified (phosphoserine). The stretch at 668-706 (LNVNDIQETCQKNAASALLVGRKDLVQVWSLATVATDLC) is one WD 8 repeat. 3 positions are modified to phosphoserine: S821, S822, and S830. A disordered region spans residues 831-852 (LTYSDPRERERDQHDKNKRLLD). The segment covering 835–851 (DPRERERDQHDKNKRLL) has biased composition (basic and acidic residues). The C4-type zinc finger occupies 901 to 920 (YCSHCRSEVRGTQCAICKGF). Zn(2+) is bound by residues C902, C905, C914, C917, C927, C938, H943, H946, H949, C960, C964, C966, and C968. The RING-type; atypical zinc finger occupies 921–973 (TFQCAICHVAVRGSSNFCLTCGHGGHTSHMMEWFRTQEVCPTGCGCHCLLEST).

The protein belongs to the WD repeat WDR59 family. Component of the GATOR2 subcomplex, composed of MIOS, SEC13, SEH1L, WDR24 and WDR59. The GATOR2 complex interacts with CASTOR1 and CASTOR2; the interaction is negatively regulated by arginine. The GATOR2 complex interacts with SESN1, SESN2 and SESN3; the interaction is negatively regulated by amino acids. Interacts with DDB1-CUL4A/B E3 ligase complexes.

It is found in the lysosome membrane. With respect to regulation, the GATOR2 complex is negatively regulated by the upstream amino acid sensors CASTOR1 and SESN2, which sequester the GATOR2 complex in absence of amino acids. In the presence of abundant amino acids, GATOR2 is released from CASTOR1 and SESN2 and activated. Its function is as follows. As a component of the GATOR2 complex, functions as an activator of the amino acid-sensing branch of the mTORC1 signaling pathway. The GATOR2 complex indirectly activates mTORC1 through the inhibition of the GATOR1 subcomplex. GATOR2 probably acts as an E3 ubiquitin-protein ligase toward GATOR1. In the presence of abundant amino acids, the GATOR2 complex mediates ubiquitination of the NPRL2 core component of the GATOR1 complex, leading to GATOR1 inactivation. In the absence of amino acids, GATOR2 is inhibited, activating the GATOR1 complex. The protein is GATOR2 complex protein WDR59 of Homo sapiens (Human).